The sequence spans 174 residues: tRNA (cytidine(56)-2'-O)-methyltransferase (174 aa).

S-adenosyl-L-methionine contacts are provided by residues Leu-83, 108–112 (GAEKV), and 126–133 (VGNQPHSE).

The protein belongs to the aTrm56 family. As to quaternary structure, homodimer.

Its subcellular location is the cytoplasm. The catalysed reaction is cytidine(56) in tRNA + S-adenosyl-L-methionine = 2'-O-methylcytidine(56) in tRNA + S-adenosyl-L-homocysteine + H(+). Functionally, specifically catalyzes the AdoMet-dependent 2'-O-ribose methylation of cytidine at position 56 in tRNAs. The polypeptide is tRNA (cytidine(56)-2'-O)-methyltransferase (Methanothrix thermoacetophila (strain DSM 6194 / JCM 14653 / NBRC 101360 / PT) (Methanosaeta thermophila)).